Here is a 330-residue protein sequence, read N- to C-terminus: Aspartate--ammonia ligase (330 aa).

It belongs to the class-II aminoacyl-tRNA synthetase family. AsnA subfamily.

Its subcellular location is the cytoplasm. It catalyses the reaction L-aspartate + NH4(+) + ATP = L-asparagine + AMP + diphosphate + H(+). It functions in the pathway amino-acid biosynthesis; L-asparagine biosynthesis; L-asparagine from L-aspartate (ammonia route): step 1/1. The protein is Aspartate--ammonia ligase of Streptococcus equi subsp. equi (strain 4047).